The following is a 143-amino-acid chain: MVLIIEIIKIGQIGPIGQRGQSGQRGQSGQRGQSGQIGQSGQSGQSGQIGQIGQIGQIGQIGQIGQIGQIGQIGQIGQIGQIGQIGQIGQIGQIGQARRTGRTGRTVHRRMLQASSSFNISPDISICRRATRNMGEEERPLGC.

29 G-Q-I/R/S repeats span residues 11–13, 14–16, 17–19, 20–22, 23–25, 26–28, 29–31, 32–34, 35–37, 38–40, 41–43, 44–46, 47–49, 50–52, 53–55, 56–58, 59–61, 62–64, 65–67, 68–70, 71–73, 74–76, 77–79, 80–82, 83–85, 86–88, 89–91, 92–94, and 95–97; these read GQI, GPI, GQR, GQS, and GQA. The Collagen-like domain occupies 11-68; it reads GQIGPIGQRGQSGQRGQSGQRGQSGQIGQSGQSGQSGQIGQIGQIGQIGQIGQIGQIG. The interval 11–97 is 29 X 3 AA approximate tandem repeats of G-Q-I/R/S; the sequence is GQIGPIGQRG…IGQIGQIGQA (87 aa). Residues 16 to 49 are disordered; sequence IGQRGQSGQRGQSGQRGQSGQIGQSGQSGQSGQI.

The protein localises to the secreted. Collagen-like protein; part of the subtelomeric hrmA-associated cluster (HAC) containing genes that alter the hyphal surface (such as reduced total chitin or increased beta-glucan exposure) and perturb inter-hyphal interactions within the developing biofilms, resulting in a loss of vertically aligned polarized growing filaments. Consequently, this hypoxia-typic morphotype (called H-MORPH) with altered biofilm architecture leads to increased hypoxia fitness, increased host inflammation, rapid disease progression, and mortality in a murine model of invasive aspergillosis. CgnA is directly involved in the reduction of total surface chitin and the increase of beta-glucan exposure, and mediates the detachment of the extracellular matrix and especially of its component galactosaminogalactan (GAG). The polypeptide is Subtelomeric hrmA-associated cluster protein cgnA (Aspergillus fumigatus (strain ATCC MYA-4609 / CBS 101355 / FGSC A1100 / Af293) (Neosartorya fumigata)).